Reading from the N-terminus, the 155-residue chain is Glycosylation-dependent cell adhesion molecule 1 (155 aa).

Positions 1–18 (MKFFAVLLLASLAATSLA) are cleaved as a signal peptide. The O-linked (GalNAc...) threonine glycan is linked to threonine 34. Serine 48, serine 53, serine 57, serine 59, and serine 65 each carry phosphoserine. The tract at residues 74–109 (ARRHQNQNPKLLHPVPQESSFRNTATQSEETKELTP) is disordered. A compositionally biased stretch (polar residues) spans 90–101 (QESSFRNTATQS).

This sequence belongs to the PP3/GlyCAM-1 family. As to expression, highly expressed in whey fraction of camel milk.

This chain is Glycosylation-dependent cell adhesion molecule 1 (GLYCAM1), found in Camelus dromedarius (Dromedary).